We begin with the raw amino-acid sequence, 226 residues long: Cytidylate kinase (226 aa).

ATP is bound at residue 10–18 (GPASSGKST).

The protein belongs to the cytidylate kinase family. Type 1 subfamily.

The protein localises to the cytoplasm. It carries out the reaction CMP + ATP = CDP + ADP. It catalyses the reaction dCMP + ATP = dCDP + ADP. The protein is Cytidylate kinase of Streptococcus equi subsp. zooepidemicus (strain MGCS10565).